We begin with the raw amino-acid sequence, 304 residues long: Secreted mono- and diacylglycerol lipase LIP1 (304 aa).

The first 19 residues, 1–19 (MLFSRFVLLAFGSVAAVSA), serve as a signal peptide directing secretion. A glycan (O-linked (Man...) threonine) is linked at Thr32. Cys57 and Cys297 form a disulfide bridge. Ser171 acts as the Nucleophile in catalysis. Residue Asp228 is part of the active site. N-linked (GlcNAc...) asparagine glycosylation occurs at Asn253. His281 is an active-site residue.

Belongs to the AB hydrolase superfamily. Lipase family. Class 3 subfamily.

The protein localises to the secreted. It is found in the cell wall. The catalysed reaction is a monoacylglycerol + H2O = glycerol + a fatty acid + H(+). The enzyme catalyses a diacylglycerol + H2O = a monoacylglycerol + a fatty acid + H(+). With respect to regulation, RHC 80267, a well-known inhibitor of diacylglycerol lipases from mammals, also acts as an inhibitor for LIP1/SMG1. Secreted lipase involved in Dandruff and seborrheic dermatitis (D/SD) probably via lipase-mediated breakdown of sebaceous lipids and release of irritating free fatty acids. Shows activity against monoglyceride and diglyceride substrates, but not triglyceride substrates and does not exhibit regio-selective production of diacylglycerols. Able to hydrolyze diacylglycerols such as distearin, dilinolein, dipalmitoylglycerol and dipalmitolein. Cleaves oleic acid from 1,2 isomers of diolein on both the 1 and the 2 position of the glycerol backbone, resulting mainly in free fatty acids but no monoolein is detected. Shows activity on monoolein and liberates mostly free fatty acids, but can also perform the reverse reaction and produce diolein. This Malassezia globosa (strain ATCC MYA-4612 / CBS 7966) (Dandruff-associated fungus) protein is Secreted mono- and diacylglycerol lipase LIP1.